A 449-amino-acid polypeptide reads, in one-letter code: Phosphoglucosamine mutase (449 aa).

Ser101 serves as the catalytic Phosphoserine intermediate. The Mg(2+) site is built by Ser101, Asp241, Asp243, and Asp245. Residue Ser101 is modified to Phosphoserine.

This sequence belongs to the phosphohexose mutase family. The cofactor is Mg(2+). Activated by phosphorylation.

It carries out the reaction alpha-D-glucosamine 1-phosphate = D-glucosamine 6-phosphate. In terms of biological role, catalyzes the conversion of glucosamine-6-phosphate to glucosamine-1-phosphate. The sequence is that of Phosphoglucosamine mutase from Ruminiclostridium cellulolyticum (strain ATCC 35319 / DSM 5812 / JCM 6584 / H10) (Clostridium cellulolyticum).